The primary structure comprises 231 residues: dTTP/UTP pyrophosphatase (231 aa).

The Proton acceptor role is filled by Asp81.

It belongs to the Maf family. YhdE subfamily. Requires a divalent metal cation as cofactor.

The protein resides in the cytoplasm. The enzyme catalyses dTTP + H2O = dTMP + diphosphate + H(+). The catalysed reaction is UTP + H2O = UMP + diphosphate + H(+). Functionally, nucleoside triphosphate pyrophosphatase that hydrolyzes dTTP and UTP. May have a dual role in cell division arrest and in preventing the incorporation of modified nucleotides into cellular nucleic acids. The polypeptide is dTTP/UTP pyrophosphatase (Lawsonia intracellularis (strain PHE/MN1-00)).